A 582-amino-acid chain; its full sequence is MLSDIDICRTTPLKPIEQIAAKAGLLADEFETHGLYKAKVSARCVKRLAEQQDGKLVLVTAITPTPLGEGKTVTTIGLAQGLQSLNQSVMACIRQPSMGPVFGVKGGAAGGGYSQVAPMDELNLHLTGDIHAVTAAHNLAAAAIDARIYHEQRAGYQAFEARTGLPALRIDPDRVVWKRVMDHNDRALRKVRVGINDEGKTINGFEREEGFDISAASELMAILALSKNLQDMRERIGKVVLAYNLDSEPVSAEQLQVAGAMTVTLKEAIKPTLMQTLEGVPTLIHAGPFANIAHGNSSIIADEIALKLSSYVVTEAGFGSDMGLEKACNIKSSTSHKAPDCVVIVATLRGLKANSGLYDLKPGMPLPDALFQPDRAALESGFSNLKWHIDNAQKYGLPVVVAINQFPQDSAEELGQLKLWIQQLPLNVRVAISEGFAKGGKGMEAVAREVIEACDAPANFRPLYRAEQTLEEKIITVCTKGYGCGEVQFSDTAKQQLALYQTLGFGELAVCMAKTPLSISSDSSLKGAPSGFTIMVREVRLCAGAGFVYALTGNVMTMPGLPDIPAFMALDIDENGDIVGLS.

Residue 65–72 (TPLGEGKT) coordinates ATP.

It belongs to the formate--tetrahydrofolate ligase family.

The catalysed reaction is (6S)-5,6,7,8-tetrahydrofolate + formate + ATP = (6R)-10-formyltetrahydrofolate + ADP + phosphate. The protein operates within one-carbon metabolism; tetrahydrofolate interconversion. The polypeptide is Formate--tetrahydrofolate ligase (Vibrio vulnificus (strain CMCP6)).